The chain runs to 349 residues: MAAQIDLKNITVQFGQNKAVNDVSLEINKGDIYGVIGFSGAGKSTLVRTINLLQYPSAGSVEVNGTVLFKDNKLQISKKQLQEKRRKIGMIFQNFNLLNEETVIENVAFALQHSRLSDQELEKKSLHLLELVGLKDKADFYPAQLSGGQQQRVAIARALANDPDILISDEATSALDPKTTNQILDLLYDLNKKLGLTVVLITHEMDAVKRVANKIVVMEKGKVIEKGELREVFLHPQKQLTRQFVGGALQAQHILNTYNFDKLAENAELYQLVYSINDVTKSVVADLDVSLNTKASILYGNVEVLSGEPIGTLAILLNLNELKQKEAIKFLESKNVVVTKLDKGVLTND.

Residues 5 to 245 (IDLKNITVQF…PQKQLTRQFV (241 aa)) enclose the ABC transporter domain. 37–44 (GFSGAGKS) lines the ATP pocket.

It belongs to the ABC transporter superfamily. Methionine importer (TC 3.A.1.24) family. In terms of assembly, the complex is composed of two ATP-binding proteins (MetN), two transmembrane proteins (MetI) and a solute-binding protein (MetQ).

The protein localises to the cell membrane. It carries out the reaction L-methionine(out) + ATP + H2O = L-methionine(in) + ADP + phosphate + H(+). It catalyses the reaction D-methionine(out) + ATP + H2O = D-methionine(in) + ADP + phosphate + H(+). Functionally, part of the ABC transporter complex MetNIQ involved in methionine import. Responsible for energy coupling to the transport system. This chain is Methionine import ATP-binding protein MetN, found in Lactobacillus johnsonii (strain CNCM I-12250 / La1 / NCC 533).